The chain runs to 155 residues: Basic phospholipase A2 PC9 (155 aa).

Positions 1 to 21 (MYPAHLLVLLAVCVSLLGASA) are cleaved as a signal peptide. The propeptide occupies 22–27 (ISPRPL). 7 cysteine pairs are disulfide-bonded: Cys38–Cys98, Cys54–Cys144, Cys56–Cys72, Cys71–Cys125, Cys78–Cys118, Cys87–Cys111, and Cys105–Cys116. Ca(2+) is bound by residues Tyr55, Gly57, and Gly59. The active site involves His75. Asp76 lines the Ca(2+) pocket. Asp119 is a catalytic residue.

This sequence belongs to the phospholipase A2 family. Group I subfamily. D49 sub-subfamily. Ca(2+) is required as a cofactor. As to expression, expressed by the venom gland.

The protein resides in the secreted. It carries out the reaction a 1,2-diacyl-sn-glycero-3-phosphocholine + H2O = a 1-acyl-sn-glycero-3-phosphocholine + a fatty acid + H(+). Snake venom phospholipase A2 (PLA2) that inhibits neuromuscular transmission by blocking acetylcholine release from the nerve termini. PLA2 catalyzes the calcium-dependent hydrolysis of the 2-acyl groups in 3-sn-phosphoglycerides. This is Basic phospholipase A2 PC9 from Laticauda colubrina (Yellow-lipped sea krait).